Consider the following 363-residue polypeptide: Strychnine O-methyltransferase (363 aa).

S-adenosyl-L-methionine-binding residues include Gly204, Asp227, Asp249, Met250, and Lys263. His267 serves as the catalytic Proton acceptor.

Belongs to the class I-like SAM-binding methyltransferase superfamily. Cation-independent O-methyltransferase family.

The enzyme catalyses 10-hydroxystrychnine + S-adenosyl-L-methionine = beta-colubrine + S-adenosyl-L-homocysteine + H(+). It carries out the reaction 11-demethylbrucine + S-adenosyl-L-methionine = brucine + S-adenosyl-L-homocysteine + H(+). It participates in alkaloid biosynthesis. In terms of biological role, O-methyltransferase involved in the biosynthesis of curare monoterpene indole alkaloids (MIAs), natural products such as strychnine, a neurotoxic compound used as a pesticide to control rodents, and its pharmacologically active derivatives, including brucine, used to regulate blood pressure. Curare alkaloids act as animal glycine receptor antagonists. Catalyzes the conversion of 10-OH strychnine to beta-colubrine, and of 11-deMe brucine to brucine. This Strychnos nux-vomica (Poison nut) protein is Strychnine O-methyltransferase.